Reading from the N-terminus, the 126-residue chain is SH2 domain-containing protein 1A (126 aa).

The region spanning 6–102 (VYHGKISREM…GIVTPLQYPV (97 aa)) is the SH2 domain. Positions 67–92 (ETAPGVHKRFFRKVKNLISAFQKPDQ) are interaction with FYN SH3 domain. N6-acetyllysine is present on lysine 89. Residues 100–126 (YPVEKSSARSPQAPTGRRDSDICLKAP) form a disordered region. Residues 115 to 126 (GRRDSDICLKAP) are compositionally biased toward basic and acidic residues. At serine 119 the chain carries Phosphoserine.

In terms of assembly, interacts with CD84, CD244, LY9, SLAMF1 and FYN. Interacts with NTRK1, NTRK2 and NTRK3.

It is found in the cytoplasm. Its function is as follows. Cytoplasmic adapter regulating receptors of the signaling lymphocytic activation molecule (SLAM) family such as SLAMF1, CD244, LY9, CD84, SLAMF6 and SLAMF7. In SLAM signaling seems to cooperate with SH2D1B/EAT-2. Initially it has been proposed that association with SLAMF1 prevents SLAMF1 binding to inhibitory effectors including INPP5D/SHIP1 and PTPN11/SHP-2. However, by simultaneous interactions, recruits FYN which subsequently phosphorylates and activates SLAMF1. Positively regulates CD244/2B4- and CD84-mediated natural killer (NK) cell functions. Can also promote CD48-, SLAMF6 -, LY9-, and SLAMF7-mediated NK cell activation. In the context of NK cell-mediated cytotoxicity enhances conjugate formation with target cells. May also regulate the activity of the neurotrophin receptors NTRK1, NTRK2 and NTRK3. In Rattus norvegicus (Rat), this protein is SH2 domain-containing protein 1A (Sh2d1a).